We begin with the raw amino-acid sequence, 352 residues long: MSVAGLKKQFHKATQKVSEKVGGAEGTKLDDDFKEMERKVDVTSRAVMEIMTKTIEYLQPNPASRAKLSMINTMSKIRGQEKGPGYPQAEALLAEAMLKFGRELGDDCNFGPALGEVGEAMRELSEVKDSLDIEVKQNFIDPLQNLHDKDLREIQHHLKKLEGRRLDFDYKKKRQGKIPDEELRQALEKFDESKEIAESSMFNLLEMDIEQVSQLSALVQAQLEYHKQAVQILQQVTVRLEERIRQASSQPRREYQPKPRMSLEFPTGDSTQPNGGLSHTGTPKPSGVQMDQPCCRALYDFEPENEGELGFKEGDIITLTNQIDENWYEGMLHGHSGFFPINYVEILVALPH.

A membrane-binding amphipathic helix region spans residues 1–21 (MSVAGLKKQFHKATQKVSEKV). Residues 1–27 (MSVAGLKKQFHKATQKVSEKVGGAEGT) form a disordered region. Positions 1 to 125 (MSVAGLKKQF…EVGEAMRELS (125 aa)) are binds and tubulates liposomes. The 232-residue stretch at 18–249 (SEKVGGAEGT…LEERIRQASS (232 aa)) folds into the BAR domain. Positions 60 to 87 (PNPASRAKLSMINTMSKIRGQEKGPGYP) are required for dimerization upon membrane association. Residues 181–248 (EELRQALEKF…RLEERIRQAS (68 aa)) adopt a coiled-coil conformation. Over residues 245–257 (RQASSQPRREYQP) the composition is skewed to basic and acidic residues. The segment at 245-289 (RQASSQPRREYQPKPRMSLEFPTGDSTQPNGGLSHTGTPKPSGVQ) is disordered. Ser-262 carries the phosphoserine modification. Positions 268–283 (GDSTQPNGGLSHTGTP) are enriched in polar residues. An SH3 domain is found at 290–349 (MDQPCCRALYDFEPENEGELGFKEGDIITLTNQIDENWYEGMLHGHSGFFPINYVEILVA). At Tyr-299 the chain carries Phosphotyrosine.

The protein belongs to the endophilin family. In terms of assembly, monomer; in cytoplasm. Homodimer; when associated with membranes. Interacts with OPHN1. Interacts with SYNJ1. Interacts with DNM1. Interacts with MAP4K3; the interaction appears to regulate MAP4K3-mediated JNK activation. Interacts with PDCD6IP. Interacts with ATXN2. Interacts with ADAM9 and ADAM15 cytoplasmic tails. Interacts with BIN2. Interacts with TMEM108. Interacts with ADGRB2. In terms of tissue distribution, brain, mostly in frontal cortex. Expressed at high level in fetal cerebellum.

It localises to the cytoplasm. Its subcellular location is the membrane. The protein localises to the early endosome. It is found in the presynapse. In terms of biological role, implicated in synaptic vesicle endocytosis. May recruit other proteins to membranes with high curvature. Required for BDNF-dependent dendrite outgrowth. Cooperates with SH3GL2 to mediate BDNF-NTRK2 early endocytic trafficking and signaling from early endosomes. In Homo sapiens (Human), this protein is Endophilin-A1 (SH3GL2).